Reading from the N-terminus, the 157-residue chain is MSRRHSAEKRPTEPDPLYGSTVLSKFINKVMESGKKSTARRIVYNAIEKFSKRIKAENPLEAFEQALENAKPSLEVKSRRIGGATYQVPIEIPANRRSSMAMRWIIGHSRGKAGRSMEDALASELSDCYNNQGTTIKKKDDTHRMAEANKAYAHYKW.

Belongs to the universal ribosomal protein uS7 family. As to quaternary structure, part of the 30S ribosomal subunit. Contacts proteins S9 and S11.

One of the primary rRNA binding proteins, it binds directly to 16S rRNA where it nucleates assembly of the head domain of the 30S subunit. Is located at the subunit interface close to the decoding center, probably blocks exit of the E-site tRNA. The sequence is that of Small ribosomal subunit protein uS7 from Protochlamydia amoebophila (strain UWE25).